The primary structure comprises 1036 residues: Pre-mRNA-processing factor 39-2 (1036 aa).

The interval 1 to 24 (MVTTEVRTAVSDKEPLQRSPELDS) is disordered. HAT repeat units lie at residues 62–94 (DDIE…HKIK), 96–128 (CTLE…FAVA), 131–166 (EDPH…YLLG), 168–201 (QQWS…IAAS), 278–310 (CFET…FGET), and 312–344 (GDFD…FVES). Disordered regions lie at residues 595-618 (GISS…YGTQ), 714-767 (PSGS…PVGT), and 995-1036 (KGDE…ISSI). Residues 714-726 (PSGSQSPQSYQSQ) show a composition bias toward low complexity. Basic and acidic residues predominate over residues 740–755 (RDLNQMHRDSKPRSQE). A compositionally biased stretch (polar residues) spans 1002-1036 (SMPQGSTTNSDIQKSQESGAVNEANLSSDTSISSI).

It belongs to the PRP39 family.

The protein resides in the nucleus. Its function is as follows. Involved in pre-mRNA splicing. This Arabidopsis thaliana (Mouse-ear cress) protein is Pre-mRNA-processing factor 39-2.